A 980-amino-acid chain; its full sequence is Ras and Rab interactor 3 (980 aa).

The disordered stretch occupies residues 1 to 40 (MRRAEAPSSAHPAGPIPDAGKGEGEEDEEKDGTRLGLSTT). The SH2 domain maps to 63–158 (WLQLGLGQAE…LLPFTLRLPQ (96 aa)). A compositionally biased stretch (pro residues) spans 247–260 (PLPTGSYPPRPTPA). 2 disordered regions span residues 247-496 (PLPT…TGAS) and 509-560 (QHLQ…LEFS). Positions 261-271 (TPDATSPTSKG) are enriched in low complexity. Pro residues predominate over residues 274–308 (RRPPPPPPLPTVPPTGPARPLAPPVPPAGPLPNSP). Composition is skewed to polar residues over residues 406–422 (ISRT…TVSS) and 484–494 (QEASSEKQATG). Residues 514–523 (QSSSCPQSSP) are compositionally biased toward low complexity. The tract at residues 584-729 (FASVFHAFLS…TTTDLGVTTS (146 aa)) is interaction with RAB5B. A VPS9 domain is found at 700–843 (HSRDGSLQQL…IKNYDKITVT (144 aa)). The region spanning 865 to 962 (KARASRSSVQ…FHFVYRPQDS (98 aa)) is the Ras-associating domain.

Belongs to the RIN (Ras interaction/interference) family. In terms of assembly, interacts with CD2AP, RAB5B, RAB31 and BIN1.

The protein localises to the cytoplasm. It localises to the cytoplasmic vesicle. It is found in the early endosome. Ras effector protein that functions as a guanine nucleotide exchange (GEF) for RAB5B and RAB31, by exchanging bound GDP for free GTP. Required for normal RAB31 function. This Mus musculus (Mouse) protein is Ras and Rab interactor 3 (Rin3).